Reading from the N-terminus, the 749-residue chain is Amyloid-beta A4 precursor protein-binding family A member 2 (749 aa).

Disordered regions lie at residues Met-1 to Glu-94 and Asp-130 to Pro-343. A Phosphoserine modification is found at Ser-11. Residues Gly-70–Thr-80 show a composition bias toward polar residues. 2 stretches are compositionally biased toward acidic residues: residues Ser-81 to Glu-94 and Thr-131 to Thr-142. The segment at His-185–Ala-270 is STXBP1-binding. The residue at position 208 (Ser-208) is a Phosphoserine. A compositionally biased stretch (acidic residues) spans Asp-218–Asp-227. The span at Leu-237–Glu-247 shows a compositional bias: polar residues. A compositionally biased stretch (basic and acidic residues) spans Arg-305–His-315. The PID domain occupies Leu-366 to Asp-555. PDZ domains follow at residues Glu-568–Ser-653 and Thr-659–Ala-735.

Part of a multimeric complex containing STXBP1 and syntaxin-1. Binds to the cytoplasmic domain of amyloid-beta protein, and to the nuclear factor NF-kappa-B/p65 via its PDZ domain. Interacts with the N-terminal domain of NECAB3.

In terms of biological role, putative function in synaptic vesicle exocytosis by binding to STXBP1, an essential component of the synaptic vesicle exocytotic machinery. May modulate processing of the amyloid-beta precursor protein (APP) and hence formation of APP-beta. The chain is Amyloid-beta A4 precursor protein-binding family A member 2 (APBA2) from Pongo abelii (Sumatran orangutan).